We begin with the raw amino-acid sequence, 394 residues long: Nicotinate phosphoribosyltransferase (394 aa).

His-218 bears the Phosphohistidine; by autocatalysis mark.

The protein belongs to the NAPRTase family. Transiently phosphorylated on a His residue during the reaction cycle. Phosphorylation strongly increases the affinity for substrates and increases the rate of nicotinate D-ribonucleotide production. Dephosphorylation regenerates the low-affinity form of the enzyme, leading to product release.

It carries out the reaction nicotinate + 5-phospho-alpha-D-ribose 1-diphosphate + ATP + H2O = nicotinate beta-D-ribonucleotide + ADP + phosphate + diphosphate. It functions in the pathway cofactor biosynthesis; NAD(+) biosynthesis; nicotinate D-ribonucleotide from nicotinate: step 1/1. Catalyzes the synthesis of beta-nicotinate D-ribonucleotide from nicotinate and 5-phospho-D-ribose 1-phosphate at the expense of ATP. This is Nicotinate phosphoribosyltransferase from Xylella fastidiosa (strain Temecula1 / ATCC 700964).